A 449-amino-acid chain; its full sequence is Glucose-6-phosphate isomerase (449 aa).

The active-site Proton donor is E291. Residues H312 and K426 contribute to the active site.

The protein belongs to the GPI family.

It is found in the cytoplasm. It catalyses the reaction alpha-D-glucose 6-phosphate = beta-D-fructose 6-phosphate. It functions in the pathway carbohydrate biosynthesis; gluconeogenesis. The protein operates within carbohydrate degradation; glycolysis; D-glyceraldehyde 3-phosphate and glycerone phosphate from D-glucose: step 2/4. Functionally, catalyzes the reversible isomerization of glucose-6-phosphate to fructose-6-phosphate. This chain is Glucose-6-phosphate isomerase, found in Streptococcus pyogenes serotype M28 (strain MGAS6180).